A 454-amino-acid polypeptide reads, in one-letter code: Chromosomal replication initiator protein DnaA (454 aa).

Residues 1–71 (MTKEQWGQLQ…HEVRQEDPAV (71 aa)) form a domain I, interacts with DnaA modulators region. The segment at 71-112 (VRRLRFAVPSHVNATTKPARPAQATAPRAPAEKTPRSTLSTA) is domain II. Residues 82–108 (VNATTKPARPAQATAPRAPAEKTPRST) form a disordered region. Residues 84 to 99 (ATTKPARPAQATAPRA) are compositionally biased toward low complexity. The tract at residues 113–334 (PLDARFTFDN…GALTRLCAFA (222 aa)) is domain III, AAA+ region. Gly157, Gly159, Lys160, and Thr161 together coordinate ATP. The domain IV, binds dsDNA stretch occupies residues 335–454 (SLVGREIDME…LELLRRALEE (120 aa)).

Belongs to the DnaA family. In terms of assembly, oligomerizes as a right-handed, spiral filament on DNA at oriC.

It localises to the cytoplasm. Functionally, plays an essential role in the initiation and regulation of chromosomal replication. ATP-DnaA binds to the origin of replication (oriC) to initiate formation of the DNA replication initiation complex once per cell cycle. Binds the DnaA box (a 9 base pair repeat at the origin) and separates the double-stranded (ds)DNA. Forms a right-handed helical filament on oriC DNA; dsDNA binds to the exterior of the filament while single-stranded (ss)DNA is stabiized in the filament's interior. The ATP-DnaA-oriC complex binds and stabilizes one strand of the AT-rich DNA unwinding element (DUE), permitting loading of DNA polymerase. After initiation quickly degrades to an ADP-DnaA complex that is not apt for DNA replication. Binds acidic phospholipids. The chain is Chromosomal replication initiator protein DnaA from Roseobacter denitrificans (strain ATCC 33942 / OCh 114) (Erythrobacter sp. (strain OCh 114)).